The chain runs to 122 residues: MTRPSLVRCYSLFFTALIVMAIICPAWSEEIPKSRKKRAIPIAYVGMAVAPQVFRWLVRAYGAAAVTAAGVTLRRVINRSRSNDNHSCYGNRGWCRSSCRSYEREYRGGNLGVCGSYKCCVT.

The N-terminal stretch at 1–28 (MTRPSLVRCYSLFFTALIVMAIICPAWS) is a signal peptide. A propeptide spanning residues 29-34 (EEIPKS) is cleaved from the precursor. Disulfide bonds link C88/C119, C95/C114, and C99/C120.

It belongs to the big defensin family. Expressed in hemocytes.

The protein localises to the secreted. Functionally, significantly inhibits the growth of Gram-negative and Gram-positive bacteria and fungi in vitro. This is Big defensin from Argopecten irradians (Bay scallop).